The chain runs to 116 residues: U16-barytoxin-Tl1b (116 aa).

The first 20 residues, 1–20 (MKTIIVFLSLLVLATKFGDA), serve as a signal peptide directing secretion. A propeptide spanning residues 21 to 74 (KEGVNQKQKKEVTQNEFREEYLNEMAAMSLVQQLEAIERALFENEAGRNSRQKR) is cleaved from the precursor. Cystine bridges form between C75-C90, C82-C95, and C89-C110.

This sequence belongs to the neurotoxin 14 (magi-1) family. 06 (ICK-Trit) subfamily. In terms of tissue distribution, expressed by the venom gland.

The protein resides in the secreted. Its function is as follows. Ion channel inhibitor. In Trittame loki (Brush-footed trapdoor spider), this protein is U16-barytoxin-Tl1b.